A 777-amino-acid polypeptide reads, in one-letter code: 1,4-alpha-glucan branching enzyme GlgB (777 aa).

Aspartate 408 (nucleophile) is an active-site residue. The active-site Proton donor is glutamate 461.

It belongs to the glycosyl hydrolase 13 family. GlgB subfamily. As to quaternary structure, monomer.

It catalyses the reaction Transfers a segment of a (1-&gt;4)-alpha-D-glucan chain to a primary hydroxy group in a similar glucan chain.. The protein operates within glycan biosynthesis; glycogen biosynthesis. Functionally, catalyzes the formation of the alpha-1,6-glucosidic linkages in glycogen by scission of a 1,4-alpha-linked oligosaccharide from growing alpha-1,4-glucan chains and the subsequent attachment of the oligosaccharide to the alpha-1,6 position. The chain is 1,4-alpha-glucan branching enzyme GlgB from Actinobacillus pleuropneumoniae serotype 7 (strain AP76).